The following is a 72-amino-acid chain: Cytochrome c oxidase subunit 8C, mitochondrial (72 aa).

The transit peptide at 1–29 (MSRLLLLCSSLLRHRAVLFSKPGHPGRLS) directs the protein to the mitochondrion. The Mitochondrial matrix portion of the chain corresponds to 30 to 40 (HSESPQKKILS). The chain crosses the membrane as a helical span at residues 41-64 (PTESAVGIVVFFTTFYIPAAYVLS). Over 65-72 (SLKYFKGE) the chain is Mitochondrial intermembrane.

It belongs to the cytochrome c oxidase VIII family. As to quaternary structure, component of the cytochrome c oxidase (complex IV, CIV), a multisubunit enzyme composed of 14 subunits. The complex is composed of a catalytic core of 3 subunits MT-CO1, MT-CO2 and MT-CO3, encoded in the mitochondrial DNA, and 11 supernumerary subunits COX4I, COX5A, COX5B, COX6A, COX6B, COX6C, COX7A, COX7B, COX7C, COX8 and NDUFA4, which are encoded in the nuclear genome. The complex exists as a monomer or a dimer and forms supercomplexes (SCs) in the inner mitochondrial membrane with NADH-ubiquinone oxidoreductase (complex I, CI) and ubiquinol-cytochrome c oxidoreductase (cytochrome b-c1 complex, complex III, CIII), resulting in different assemblies (supercomplex SCI(1)III(2)IV(1) and megacomplex MCI(2)III(2)IV(2)).

It localises to the mitochondrion inner membrane. Its pathway is energy metabolism; oxidative phosphorylation. Component of the cytochrome c oxidase, the last enzyme in the mitochondrial electron transport chain which drives oxidative phosphorylation. The respiratory chain contains 3 multisubunit complexes succinate dehydrogenase (complex II, CII), ubiquinol-cytochrome c oxidoreductase (cytochrome b-c1 complex, complex III, CIII) and cytochrome c oxidase (complex IV, CIV), that cooperate to transfer electrons derived from NADH and succinate to molecular oxygen, creating an electrochemical gradient over the inner membrane that drives transmembrane transport and the ATP synthase. Cytochrome c oxidase is the component of the respiratory chain that catalyzes the reduction of oxygen to water. Electrons originating from reduced cytochrome c in the intermembrane space (IMS) are transferred via the dinuclear copper A center (CU(A)) of subunit 2 and heme A of subunit 1 to the active site in subunit 1, a binuclear center (BNC) formed by heme A3 and copper B (CU(B)). The BNC reduces molecular oxygen to 2 water molecules using 4 electrons from cytochrome c in the IMS and 4 protons from the mitochondrial matrix. This Mus musculus (Mouse) protein is Cytochrome c oxidase subunit 8C, mitochondrial (Cox8c).